The sequence spans 203 residues: MKLLHVDGSILGPHSVSRTVSAAIVDRLRAQHPGLEVIYRDLAGTPLPHLSGAVLAGAQPNATNTPDVQHDVELGRQVLEEFLAADIVVIGAPLYNFTLSSQLKAWIDRILVAGVTFRYGPTGAEGLAGGKRVIAVVSRGGLYGPGTPAAAAEHAETYLRTVLAFIGITAPEIIVAEGIALGAEARERALAGALDAAAALKAA.

Residues serine 9, 15–17 (SVS), and 138–141 (SRGG) contribute to the FMN site.

This sequence belongs to the azoreductase type 1 family. As to quaternary structure, homodimer. It depends on FMN as a cofactor.

It carries out the reaction 2 a quinone + NADH + H(+) = 2 a 1,4-benzosemiquinone + NAD(+). It catalyses the reaction N,N-dimethyl-1,4-phenylenediamine + anthranilate + 2 NAD(+) = 2-(4-dimethylaminophenyl)diazenylbenzoate + 2 NADH + 2 H(+). Its function is as follows. Quinone reductase that provides resistance to thiol-specific stress caused by electrophilic quinones. In terms of biological role, also exhibits azoreductase activity. Catalyzes the reductive cleavage of the azo bond in aromatic azo compounds to the corresponding amines. In Methylorubrum extorquens (strain CM4 / NCIMB 13688) (Methylobacterium extorquens), this protein is FMN-dependent NADH:quinone oxidoreductase.